Here is an 89-residue protein sequence, read N- to C-terminus: Calsenilin isoform 4 (89 aa).

The interval 27-57 is disordered; that stretch reads SSRDAEDQGSREGIGWQPPGRSWAHTTEQEG.

As to expression, isoform 1 or isoform 4 (T+ forms) are expressed at equal levels with isoform 2 or isoform 3 (T- forms) in brain.

Unknown for isoform 4. Csen is involved in calcium-dependent transcriptional repression, regulation of potassium channels, and perhaps in processing of PSEN2 and apoptosis. This Mus musculus (Mouse) protein is Calsenilin isoform 4 (Kcnip3).